The primary structure comprises 342 residues: Inactive chitinase-like protein 2 (342 aa).

The first 19 residues, 1–19 (MKEIVRALEGYGPPKDKAA), serve as a signal peptide directing secretion. Positions 20-60 (EQCGWQAGGALCPGGLCCSQYGWCANTPEYCGSGCQSQCDG) constitute a Chitin-binding type-1 domain. Disulfide bonds link Cys-22/Cys-37, Cys-31/Cys-43, Cys-36/Cys-80, Cys-84/Cys-88, Cys-122/Cys-184, Cys-196/Cys-204, and Cys-301/Cys-333.

It belongs to the glycosyl hydrolase 19 family. Chitinase class I subfamily.

In terms of biological role, inactive chitinase-like protein that does not exhibit hydrolytic activity toward chitin. Binds strongly to chitin and possesses antifungal activity toward the fungal pathogen Altenaria alternata in plate assays. Probably involved in defense against fungal pathogens through a mechanism that only involves carbohydrate binding. The protein is Inactive chitinase-like protein 2 of Hevea brasiliensis (Para rubber tree).